Consider the following 131-residue polypeptide: Global transcriptional regulator Spx (131 aa).

Cys10 and Cys13 are oxidised to a cystine.

Belongs to the ArsC family. Spx subfamily. Interacts with the C-terminal domain of the alpha subunit of the RNAP.

The protein resides in the cytoplasm. In terms of biological role, global transcriptional regulator that plays a key role in stress response and exerts either positive or negative regulation of genes. Acts by interacting with the C-terminal domain of the alpha subunit of the RNA polymerase (RNAP). This interaction can enhance binding of RNAP to the promoter region of target genes and stimulate their transcription, or block interaction of RNAP with activator. In Staphylococcus haemolyticus (strain JCSC1435), this protein is Global transcriptional regulator Spx.